The following is a 270-amino-acid chain: Thiazole synthase (270 aa).

Catalysis depends on K111, which acts as the Schiff-base intermediate with DXP. 1-deoxy-D-xylulose 5-phosphate is bound by residues G172, A198–G199, and N220–S221. The disordered stretch occupies residues A249–D270. Over residues A256–D270 the composition is skewed to polar residues.

This sequence belongs to the ThiG family. Homotetramer. Forms heterodimers with either ThiH or ThiS.

Its subcellular location is the cytoplasm. The catalysed reaction is [ThiS sulfur-carrier protein]-C-terminal-Gly-aminoethanethioate + 2-iminoacetate + 1-deoxy-D-xylulose 5-phosphate = [ThiS sulfur-carrier protein]-C-terminal Gly-Gly + 2-[(2R,5Z)-2-carboxy-4-methylthiazol-5(2H)-ylidene]ethyl phosphate + 2 H2O + H(+). It participates in cofactor biosynthesis; thiamine diphosphate biosynthesis. Catalyzes the rearrangement of 1-deoxy-D-xylulose 5-phosphate (DXP) to produce the thiazole phosphate moiety of thiamine. Sulfur is provided by the thiocarboxylate moiety of the carrier protein ThiS. In vitro, sulfur can be provided by H(2)S. This Synechococcus sp. (strain WH7803) protein is Thiazole synthase.